A 260-amino-acid chain; its full sequence is NH(3)-dependent NAD(+) synthetase (260 aa).

31–38 is a binding site for ATP; that stretch reads GLSGGLDS. Aspartate 37 is a Mg(2+) binding site. Residue arginine 112 coordinates deamido-NAD(+). Threonine 132 contacts ATP. Position 137 (glutamate 137) interacts with Mg(2+). Positions 161 and 183 each coordinate ATP.

This sequence belongs to the NAD synthetase family. Homodimer.

The enzyme catalyses deamido-NAD(+) + NH4(+) + ATP = AMP + diphosphate + NAD(+) + H(+). It participates in cofactor biosynthesis; NAD(+) biosynthesis; NAD(+) from deamido-NAD(+) (ammonia route): step 1/1. Catalyzes the ATP-dependent amidation of deamido-NAD to form NAD. Uses ammonia as a nitrogen source. The polypeptide is NH(3)-dependent NAD(+) synthetase (Helicobacter pylori (strain ATCC 700392 / 26695) (Campylobacter pylori)).